Consider the following 44-residue polypeptide: uncharacterized protein (44 aa).

The first 28 residues, 1–28, serve as a signal peptide directing secretion; that stretch reads MLRDLGRRVAIAAILSGIILGGMSISLA.

This is an uncharacterized protein from Bacillus subtilis (strain 168).